The sequence spans 420 residues: Caspase-12 (420 aa).

A CARD domain is found at 1–92 (MAAKRTHERD…QLSLQFPSDD (92 aa)). A phosphoserine mark is found at serine 85 and serine 90. The disordered stretch occupies residues 93–115 (EEDELQKMFTPSSASESRGKVED). Catalysis depends on residues histidine 251 and cysteine 299.

This sequence belongs to the peptidase C14A family. In terms of assembly, heterotetramer that consists of two anti-parallel arranged heterodimers, each one formed by two subunits (Potential). May interact with TRAF2.

Its function is as follows. Involved in the activation cascade of caspases responsible for apoptosis execution. The chain is Caspase-12 (Casp12) from Rattus norvegicus (Rat).